Here is a 292-residue protein sequence, read N- to C-terminus: MQIVLISGLSGSGKSIALKVLEDVGYYAVDNLPATLLPELVAELSDTGHERVAIAVDVRSGASLLALPQQVEHLHALASDLRLIFLDARDDTLIARFSETRRRHPLASEDVSLAEAIQSERDALASIAELGHRIDTSELHANTLRAWIKDFLAIEATEGLTLMFQSFGFKYGIPLDADLVFDVRCLPNPHYDLRLRPFTGKDQPVIEFLDSFPEVGRMCEDIRRFVATWLPSYARDNRSYLTVAIGCTGGQHRSVYIAEWLGRHFSDTLRVLVRHRSAARRIVDHGADMADK.

8–15 (GLSGSGKS) is a binding site for ATP. A GTP-binding site is contributed by 57 to 60 (DVRS).

The protein belongs to the RapZ-like family.

In terms of biological role, displays ATPase and GTPase activities. This chain is Nucleotide-binding protein AZOSEA20610, found in Aromatoleum aromaticum (strain DSM 19018 / LMG 30748 / EbN1) (Azoarcus sp. (strain EbN1)).